We begin with the raw amino-acid sequence, 453 residues long: Probable glycine dehydrogenase (decarboxylating) subunit 1 (453 aa).

It belongs to the GcvP family. N-terminal subunit subfamily. In terms of assembly, the glycine cleavage system is composed of four proteins: P, T, L and H. In this organism, the P 'protein' is a heterodimer of two subunits.

It carries out the reaction N(6)-[(R)-lipoyl]-L-lysyl-[glycine-cleavage complex H protein] + glycine + H(+) = N(6)-[(R)-S(8)-aminomethyldihydrolipoyl]-L-lysyl-[glycine-cleavage complex H protein] + CO2. Functionally, the glycine cleavage system catalyzes the degradation of glycine. The P protein binds the alpha-amino group of glycine through its pyridoxal phosphate cofactor; CO(2) is released and the remaining methylamine moiety is then transferred to the lipoamide cofactor of the H protein. This is Probable glycine dehydrogenase (decarboxylating) subunit 1 from Dictyoglomus turgidum (strain DSM 6724 / Z-1310).